Here is a 521-residue protein sequence, read N- to C-terminus: Cytochrome P450 1A1 (521 aa).

Phe229 is a substrate binding site. Residue Cys463 participates in heme binding.

Belongs to the cytochrome P450 family. The cofactor is heme.

Its subcellular location is the endoplasmic reticulum membrane. It localises to the microsome membrane. The catalysed reaction is an organic molecule + reduced [NADPH--hemoprotein reductase] + O2 = an alcohol + oxidized [NADPH--hemoprotein reductase] + H2O + H(+). Its function is as follows. Cytochromes P450 are a group of heme-thiolate monooxygenases. They oxidize a variety of structurally unrelated compounds, including steroids, fatty acids, and xenobiotics. The polypeptide is Cytochrome P450 1A1 (cyp1a1) (Platichthys flesus (European flounder)).